We begin with the raw amino-acid sequence, 245 residues long: Probable 2-phosphosulfolactate phosphatase (245 aa).

Belongs to the ComB family. Requires Mg(2+) as cofactor.

It catalyses the reaction (2R)-O-phospho-3-sulfolactate + H2O = (2R)-3-sulfolactate + phosphate. The sequence is that of Probable 2-phosphosulfolactate phosphatase from Nostoc sp. (strain PCC 7120 / SAG 25.82 / UTEX 2576).